A 351-amino-acid chain; its full sequence is Quinolinate phosphoribosyltransferase [decarboxylating] 2a, mitochondrial (351 aa).

Substrate is bound by residues Arg142, 173–175, Arg197, Lys207, Glu240, Asp267, 299–301, and 320–322; these read TRK, SGN, and SGA.

The protein belongs to the NadC/ModD family. In terms of tissue distribution, expressed in roots and flowers.

It is found in the mitochondrion. The catalysed reaction is nicotinate beta-D-ribonucleotide + CO2 + diphosphate = quinolinate + 5-phospho-alpha-D-ribose 1-diphosphate + 2 H(+). The protein operates within alkaloid biosynthesis; nicotine biosynthesis. Its pathway is cofactor biosynthesis; NAD(+) biosynthesis; nicotinate D-ribonucleotide from quinolinate: step 1/1. Involved in the biosynthesis of pyridine alkaloid natural products, leading mainly to the production of anabasine, anatabine, nicotine and nornicotine, effective deterrents against herbivores with antiparasitic and pesticide properties (neurotoxins); nornicotine serves as the precursor in the synthesis of the carcinogen compound N'-nitrosonornicotine (NNN). Involved in the catabolism of quinolinic acid (QA). This Nicotiana tabacum (Common tobacco) protein is Quinolinate phosphoribosyltransferase [decarboxylating] 2a, mitochondrial.